Reading from the N-terminus, the 422-residue chain is E3 ubiquitin-protein ligase CBLL2 (422 aa).

The RING-type zinc finger occupies 54-94; it reads CDKCDLPIKIYGRIIPCKHAFCYNCANLYDKIGYKICPRCS. An HYB domain region spans residues 93-151; the sequence is CSYPVLRIEEHKRGSVFMCSVVQGCKRTYLSQKSLQAHIKRRHKRARKQVASASLEKLR. A C2H2-type zinc finger spans residues 109 to 135; the sequence is FMCSVVQGCKRTYLSQKSLQAHIKRRH. Disordered regions lie at residues 190–213 and 378–422; these read MQQM…PELS and QTDA…HRPY. Positions 195–205 are enriched in basic and acidic residues; it reads HEQHNQPHKDL. Residues 393-405 are compositionally biased toward pro residues; the sequence is LPPPPPTWSPPPS. Residues 410–422 show a composition bias toward basic residues; the sequence is GSHHSYQRRHRPY.

As to quaternary structure, homodimer.

It is found in the cytoplasm. The catalysed reaction is S-ubiquitinyl-[E2 ubiquitin-conjugating enzyme]-L-cysteine + [acceptor protein]-L-lysine = [E2 ubiquitin-conjugating enzyme]-L-cysteine + N(6)-ubiquitinyl-[acceptor protein]-L-lysine.. Its pathway is protein modification; protein ubiquitination. E3 ubiquitin ligase catalyzing the covalent attachment of ubiquitin moieties onto substrate proteins. May operate on tyrosine-phosphorylated SRC substrates. The chain is E3 ubiquitin-protein ligase CBLL2 (CBLL2) from Macaca fascicularis (Crab-eating macaque).